A 380-amino-acid chain; its full sequence is Alanine racemase (380 aa).

The active-site Proton acceptor; specific for D-alanine is lysine 41. Residue lysine 41 is modified to N6-(pyridoxal phosphate)lysine. Substrate is bound at residue arginine 141. Tyrosine 271 (proton acceptor; specific for L-alanine) is an active-site residue. Substrate is bound at residue methionine 318.

This sequence belongs to the alanine racemase family. The cofactor is pyridoxal 5'-phosphate.

It catalyses the reaction L-alanine = D-alanine. It participates in amino-acid biosynthesis; D-alanine biosynthesis; D-alanine from L-alanine: step 1/1. In terms of biological role, catalyzes the interconversion of L-alanine and D-alanine. May also act on other amino acids. The chain is Alanine racemase (alr) from Latilactobacillus sakei subsp. sakei (strain 23K) (Lactobacillus sakei subsp. sakei).